Reading from the N-terminus, the 121-residue chain is Large ribosomal subunit protein uL14 (121 aa).

The protein belongs to the universal ribosomal protein uL14 family. In terms of assembly, part of the 50S ribosomal subunit. Forms a cluster with proteins L3 and L19. In the 70S ribosome, L14 and L19 interact and together make contacts with the 16S rRNA in bridges B5 and B8.

In terms of biological role, binds to 23S rRNA. Forms part of two intersubunit bridges in the 70S ribosome. The sequence is that of Large ribosomal subunit protein uL14 from Prochlorococcus marinus (strain MIT 9303).